The following is a 366-amino-acid chain: 5-hydroxytryptamine receptor 1F (366 aa).

Topologically, residues 1–24 are extracellular; sequence MDFLNSSDQNLTSEELLNRMPSKI. N-linked (GlcNAc...) asparagine glycosylation is found at asparagine 5 and asparagine 10. A helical membrane pass occupies residues 25–49; that stretch reads LVSLTLSGLALMTTTINCLVITAII. The Cytoplasmic segment spans residues 50–59; the sequence is VTRKLHHPAN. The chain crosses the membrane as a helical span at residues 60-81; that stretch reads YLICSLAVTDFLVAVLVMPFSI. Topologically, residues 82 to 96 are extracellular; that stretch reads VYIVRESWIMGQGLC. Cysteine 96 and cysteine 172 are oxidised to a cystine. Residues 97 to 119 form a helical membrane-spanning segment; the sequence is DLWLSVDIICCTCSILHLSAIAL. Aspartate 103 and cysteine 107 together coordinate serotonin. The DRY motif; important for ligand-induced conformation changes signature appears at 120-122; the sequence is DRY. The Cytoplasmic portion of the chain corresponds to 120–139; sequence DRYRAITDAVEYARKRTPRH. The helical transmembrane segment at 140–159 threads the bilayer; the sequence is AGITITTVWVISVFISVPPL. At 160–178 the chain is on the extracellular side; it reads FWRHQGNSRDDQCIIKHDH. The chain crosses the membrane as a helical span at residues 179–202; that stretch reads IVSTIYSTFGAFYIPLVLILILYY. The Cytoplasmic segment spans residues 203 to 291; sequence KIYRAARTLY…KISGTRERKA (89 aa). Residues 292-315 form a helical membrane-spanning segment; it reads ATTLGLILGAFVICWLPFFVKELV. Residues 316–327 lie on the Extracellular side of the membrane; it reads VNICEKCKISEE. Residues 328–350 form a helical membrane-spanning segment; that stretch reads MSNFLAWLGYLNSLINPLIYTIF. Positions 343–347 match the NPxxY motif; important for ligand-induced conformation changes and signaling motif; the sequence is NPLIY. Topologically, residues 351 to 366 are cytoplasmic; sequence NEDFKKAFQKLVRCRN.

It belongs to the G-protein coupled receptor 1 family.

Its subcellular location is the cell membrane. In terms of biological role, G-protein coupled receptor for 5-hydroxytryptamine (serotonin). Also functions as a receptor for various alkaloids and psychoactive substances. Ligand binding causes a conformation change that triggers signaling via guanine nucleotide-binding proteins (G proteins) and modulates the activity of downstream effectors, such as adenylate cyclase. HTR1F is coupled to G(i)/G(o) G alpha proteins and mediates inhibitory neurotransmission by inhibiting adenylate cyclase activity. This chain is 5-hydroxytryptamine receptor 1F (Htr1f), found in Rattus norvegicus (Rat).